A 183-amino-acid polypeptide reads, in one-letter code: Putative 3-methyladenine DNA glycosylase (183 aa).

This sequence belongs to the DNA glycosylase MPG family.

The polypeptide is Putative 3-methyladenine DNA glycosylase (Wolbachia pipientis subsp. Culex pipiens (strain wPip)).